The chain runs to 682 residues: TPR repeat-containing thioredoxin TTL4 (682 aa).

2 disordered regions span residues 1-120 (MSHY…GTPL) and 132-157 (NNNN…TGNI). Residue Ser-8 is modified to Phosphoserine. Residues 16–39 (KFRDSLSFQRDDDVINKPDFRELD) show a composition bias toward basic and acidic residues. The residue at position 42 (Ser-42) is a Phosphoserine. Low complexity predominate over residues 48 to 71 (GSSSAAATPAASGSSSSSSGSASG). TPR repeat units lie at residues 211 to 244 (SEEV…SPEN), 246 to 278 (AYRS…DPSY), 280 to 312 (RAHQ…PDQA), 402 to 435 (AYVL…DHSN), 449 to 482 (VAKA…DAFN), 483 to 516 (SVLY…QPSY), and 518 to 550 (KALL…LPGD). The Thioredoxin domain maps to 587–674 (DKFKTATSLP…MVCPSHQLLE (88 aa)).

In terms of tissue distribution, widely expressed.

In terms of biological role, involved in osmotic and salt stress tolerance. May play a role in the control of meristematic cell size during osmotic stress. In Arabidopsis thaliana (Mouse-ear cress), this protein is TPR repeat-containing thioredoxin TTL4 (TTL4).